Reading from the N-terminus, the 72-residue chain is Putative snRNP Sm-like protein (72 aa).

In terms of domain architecture, Sm spans 4-72; that stretch reads RPLDILNNAL…RGDNVVYVSP (69 aa).

It belongs to the snRNP Sm proteins family.

In Methanosarcina barkeri (strain Fusaro / DSM 804), this protein is Putative snRNP Sm-like protein.